Here is a 356-residue protein sequence, read N- to C-terminus: Ferrochelatase (356 aa).

Residues H214 and E295 each contribute to the Fe cation site.

This sequence belongs to the ferrochelatase family.

The protein resides in the cytoplasm. The enzyme catalyses heme b + 2 H(+) = protoporphyrin IX + Fe(2+). The protein operates within porphyrin-containing compound metabolism; protoheme biosynthesis; protoheme from protoporphyrin-IX: step 1/1. Functionally, catalyzes the ferrous insertion into protoporphyrin IX. The sequence is that of Ferrochelatase from Paraburkholderia xenovorans (strain LB400).